The sequence spans 363 residues: tRNA(Met) cytidine acetate ligase (363 aa).

ATP is bound by residues Ile7 to Leu20, Gly96, Asn152, and Arg175.

Belongs to the TmcAL family.

The protein localises to the cytoplasm. The catalysed reaction is cytidine(34) in elongator tRNA(Met) + acetate + ATP = N(4)-acetylcytidine(34) in elongator tRNA(Met) + AMP + diphosphate. In terms of biological role, catalyzes the formation of N(4)-acetylcytidine (ac(4)C) at the wobble position of elongator tRNA(Met), using acetate and ATP as substrates. First activates an acetate ion to form acetyladenylate (Ac-AMP) and then transfers the acetyl group to tRNA to form ac(4)C34. This chain is tRNA(Met) cytidine acetate ligase, found in Streptococcus thermophilus (strain CNRZ 1066).